Here is a 526-residue protein sequence, read N- to C-terminus: Bifunctional purine biosynthesis protein PurH (526 aa).

The 149-residue stretch at 1–149 (MLHSLPIRRA…KNHEAVTVVV (149 aa)) folds into the MGS-like domain.

Belongs to the PurH family.

The enzyme catalyses (6R)-10-formyltetrahydrofolate + 5-amino-1-(5-phospho-beta-D-ribosyl)imidazole-4-carboxamide = 5-formamido-1-(5-phospho-D-ribosyl)imidazole-4-carboxamide + (6S)-5,6,7,8-tetrahydrofolate. The catalysed reaction is IMP + H2O = 5-formamido-1-(5-phospho-D-ribosyl)imidazole-4-carboxamide. The protein operates within purine metabolism; IMP biosynthesis via de novo pathway; 5-formamido-1-(5-phospho-D-ribosyl)imidazole-4-carboxamide from 5-amino-1-(5-phospho-D-ribosyl)imidazole-4-carboxamide (10-formyl THF route): step 1/1. It functions in the pathway purine metabolism; IMP biosynthesis via de novo pathway; IMP from 5-formamido-1-(5-phospho-D-ribosyl)imidazole-4-carboxamide: step 1/1. This Rhodospirillum rubrum (strain ATCC 11170 / ATH 1.1.1 / DSM 467 / LMG 4362 / NCIMB 8255 / S1) protein is Bifunctional purine biosynthesis protein PurH.